The chain runs to 141 residues: Nucleoside diphosphate kinase (141 aa).

Positions 11, 59, 87, 93, 104, and 114 each coordinate ATP. Catalysis depends on histidine 117, which acts as the Pros-phosphohistidine intermediate.

It belongs to the NDK family. In terms of assembly, homotetramer. Mg(2+) serves as cofactor.

The protein localises to the cytoplasm. The enzyme catalyses a 2'-deoxyribonucleoside 5'-diphosphate + ATP = a 2'-deoxyribonucleoside 5'-triphosphate + ADP. It catalyses the reaction a ribonucleoside 5'-diphosphate + ATP = a ribonucleoside 5'-triphosphate + ADP. Major role in the synthesis of nucleoside triphosphates other than ATP. The ATP gamma phosphate is transferred to the NDP beta phosphate via a ping-pong mechanism, using a phosphorylated active-site intermediate. In Histophilus somni (strain 129Pt) (Haemophilus somnus), this protein is Nucleoside diphosphate kinase.